We begin with the raw amino-acid sequence, 176 residues long: Large ribosomal subunit protein uL10 (176 aa).

Belongs to the universal ribosomal protein uL10 family. Part of the ribosomal stalk of the 50S ribosomal subunit. The N-terminus interacts with L11 and the large rRNA to form the base of the stalk. The C-terminus forms an elongated spine to which L12 dimers bind in a sequential fashion forming a multimeric L10(L12)X complex.

Its function is as follows. Forms part of the ribosomal stalk, playing a central role in the interaction of the ribosome with GTP-bound translation factors. This chain is Large ribosomal subunit protein uL10, found in Thioalkalivibrio sulfidiphilus (strain HL-EbGR7).